The sequence spans 64 residues: Large ribosomal subunit protein bL35 (64 aa).

2 stretches are compositionally biased toward basic residues: residues 1–15 (MPKQ…KRFR) and 23–43 (VRQK…RTRR). The tract at residues 1 to 64 (MPKQKSHSGA…AGRIKRLLAR (64 aa)) is disordered.

This sequence belongs to the bacterial ribosomal protein bL35 family.

The chain is Large ribosomal subunit protein bL35 from Frankia alni (strain DSM 45986 / CECT 9034 / ACN14a).